The following is a 258-amino-acid chain: Ribosomal RNA small subunit methyltransferase J (258 aa).

Residues arginine 107–aspartate 108, glutamate 123–arginine 124, serine 159–serine 160, and aspartate 177 each bind S-adenosyl-L-methionine.

The protein belongs to the methyltransferase superfamily. RsmJ family.

It is found in the cytoplasm. It catalyses the reaction guanosine(1516) in 16S rRNA + S-adenosyl-L-methionine = N(2)-methylguanosine(1516) in 16S rRNA + S-adenosyl-L-homocysteine + H(+). Functionally, specifically methylates the guanosine in position 1516 of 16S rRNA. This chain is Ribosomal RNA small subunit methyltransferase J, found in Shewanella sediminis (strain HAW-EB3).